The sequence spans 1154 residues: Kinesin-like protein KIN-7E, chloroplastic (1154 aa).

Composition is skewed to low complexity over residues 1–14 (MSSSSRPGRASISP) and 29–109 (VAAA…PPVA). A chloroplast-targeting transit peptide spans 1-21 (MSSSSRPGRASISPFRSRRTS). The disordered stretch occupies residues 1–109 (MSSSSRPGRA…RAAGRAPPVA (109 aa)). A Kinesin motor domain is found at 119–437 (NIMVTVRFRP…LKFAHRSKHI (319 aa)). 199–206 (GVTSSGKT) serves as a coordination point for ATP. Positions 441–523 (ASQNKIIDEK…AALMGRIQRL (83 aa)) form a coiled coil. The tract at residues 620–674 (LSTSVDSESTASGSPSFSRSSQQKHPLLDLKDGRRKSMTRKGDDPALTDSFPGRT) is disordered. Residues 628 to 640 (STASGSPSFSRSS) are compositionally biased toward low complexity. Coiled-coil stretches lie at residues 734–761 (DSQIQEQIEKLKNEIDEKKSHIRVLEQR) and 801–845 (ADNR…DNVA). Residues 838–885 (AKNEDNVASMQSSEPSSTSSNPRDLANEVASHSKMPSRTTEDHTESPL) are disordered. Positions 846–857 (SMQSSEPSSTSS) are enriched in low complexity. Residues 894 to 967 (AEIENLKLDK…DLAAAKDQTR (74 aa)) are a coiled coil.

The protein belongs to the TRAFAC class myosin-kinesin ATPase superfamily. Kinesin family. KIN-7 subfamily.

It localises to the plastid. The protein resides in the chloroplast. The sequence is that of Kinesin-like protein KIN-7E, chloroplastic from Oryza sativa subsp. japonica (Rice).